The sequence spans 168 residues: Acetolactate synthase small subunit (168 aa).

In terms of domain architecture, ACT spans 7-82 (TLSVLVEDKP…VIKIVEQDDE (76 aa)).

It belongs to the acetolactate synthase small subunit family. In terms of assembly, dimer of large and small chains.

It catalyses the reaction 2 pyruvate + H(+) = (2S)-2-acetolactate + CO2. The protein operates within amino-acid biosynthesis; L-isoleucine biosynthesis; L-isoleucine from 2-oxobutanoate: step 1/4. It participates in amino-acid biosynthesis; L-valine biosynthesis; L-valine from pyruvate: step 1/4. This chain is Acetolactate synthase small subunit (ilvH), found in Mycobacterium bovis (strain ATCC BAA-935 / AF2122/97).